The chain runs to 263 residues: Indole-3-glycerol phosphate synthase (263 aa).

The protein belongs to the TrpC family.

The enzyme catalyses 1-(2-carboxyphenylamino)-1-deoxy-D-ribulose 5-phosphate + H(+) = (1S,2R)-1-C-(indol-3-yl)glycerol 3-phosphate + CO2 + H2O. It functions in the pathway amino-acid biosynthesis; L-tryptophan biosynthesis; L-tryptophan from chorismate: step 4/5. This Acidithiobacillus ferrooxidans (strain ATCC 23270 / DSM 14882 / CIP 104768 / NCIMB 8455) (Ferrobacillus ferrooxidans (strain ATCC 23270)) protein is Indole-3-glycerol phosphate synthase.